Consider the following 686-residue polypeptide: DNA ligase (686 aa).

Residues 34–38 (DAEYD), 83–84 (SI), and E120 each bind NAD(+). Catalysis depends on K122, which acts as the N6-AMP-lysine intermediate. NAD(+)-binding residues include R143, E180, K298, and K322. C420, C423, C438, and C444 together coordinate Zn(2+). In terms of domain architecture, BRCT spans 603–686 (QSGGILSGKT…ALLGSNKKNG (84 aa)).

The protein belongs to the NAD-dependent DNA ligase family. LigA subfamily. Mg(2+) is required as a cofactor. Mn(2+) serves as cofactor.

It carries out the reaction NAD(+) + (deoxyribonucleotide)n-3'-hydroxyl + 5'-phospho-(deoxyribonucleotide)m = (deoxyribonucleotide)n+m + AMP + beta-nicotinamide D-nucleotide.. In terms of biological role, DNA ligase that catalyzes the formation of phosphodiester linkages between 5'-phosphoryl and 3'-hydroxyl groups in double-stranded DNA using NAD as a coenzyme and as the energy source for the reaction. It is essential for DNA replication and repair of damaged DNA. This is DNA ligase from Thiobacillus denitrificans (strain ATCC 25259 / T1).